The chain runs to 99 residues: MAIFRSTLVLLLILFCLTTFELHVHAAEDSQVGEGVVKIDCGGRCKGRCSKSSRPNLCLRACNSCCYRCNCVPPGTAGNHHLCPCYASITTRGGRLKCP.

A signal peptide spans 1–26 (MAIFRSTLVLLLILFCLTTFELHVHA).

The protein belongs to the GASA family. Post-translationally, six disulfide bonds may be present. Expressed in siliques, dry seeds and vasculature of roots and rosette leaves.

Its subcellular location is the secreted. In terms of biological role, gibberellin-regulated protein that may function in hormonal controlled steps of development such as seed germination, flowering and seed maturation. This is Gibberellin-regulated protein 3 (GASA3) from Arabidopsis thaliana (Mouse-ear cress).